The primary structure comprises 746 residues: MSLVVDTNKRKQKGKSFYTEEQKKVMIENTVIKCILKSLKNNLGSLELLISIDSEHQFLEDYQLFLKLKERRSGTESEFPLQNTGSLEYKTEINAHVLPMPVEMGQTYDFYVEFRKKYEDAEQEPLLKRLSAEVNSIERAFHVDQTTELLILPYTTDKGNFSIKVKREAKIIRFDQIEISSEEISITGYAGYLSSENQYRIKNLNLILKKGGETPIEEKFPIKLERKTHGLENMRADGFVPELYDFEVKVPLKEIPFSNEKRYVYRLFMEYICNDDEGTDIQFNSTALVLGDRKNKLKGLVSIIKTNNAPVRYEVFKKKKKQTLGIRVNDYSLKTRMKYFIKGKKKRLVSKIKKITKMRNKLITKTYKSLFMMASRMPVKRKTVIFESFNGKQYSCNPRAIYEYMRENHPEYKMYWSVNKQYSAPFDEKGIPYINRLSLKWLFAMARAEYWVVNSRLPLWIPKPSHTTYLQTWHGTPLKRLAMDMEEVHMPGTNTKKYKRNFIKEASNWDYLISPNGYSTEIFTRAFQFNKTMIESGYPRNDFLHNDNNEETISLIKSRLNIPRDKKVILYAPTWRDDQFYAKGRYKFDLDLDLHQLRQELGNEYIVILRMHYLVAENFDLGPFEGFAYDFSAYEDIRELYMVSDLLITDYSSVFFDFANLKRPMLFFVPDIETYRDKLRGFYFDFEKEAPGPLVKTTEETIEAIKQISSPDYKLPVSFGPFYDKFCYLESGRSSEKVVNTVFKAE.

Residues Trp-473–Pro-477, Arg-540, Pro-573–Thr-574, Arg-610–His-612, Ser-652–Ser-653, and Asp-657 each bind CDP-glycerol.

It belongs to the CDP-glycerol glycerophosphotransferase family.

The protein resides in the cell membrane. The catalysed reaction is 4-O-[(2R)-glycerylphospho]-N-acetyl-beta-D-mannosaminyl-(1-&gt;4)-N-acetyl-alpha-D-glucosaminyl di-trans,octa-cis-undecaprenyl diphosphate + n CDP-glycerol = 4-O-{[(2R)-1-glycerylphospho](n)-(2R)-1-glycerylphospho}-N-acetyl-beta-D-mannosaminyl-(1-&gt;4)-N-acetyl-alpha-D-glucosaminyl undecaprenyl diphosphate + n CMP + n H(+). Its pathway is cell wall biogenesis; poly(glycerol phosphate) teichoic acid biosynthesis. Responsible for the polymerization of the main chain of the major teichoic acid by sequential transfer of glycerol phosphate units from CDP-glycerol to the disaccharide linkage unit. Synthesizes polymers of approximately 35 glycerol phosphate units in length. This Bacillus subtilis (strain 168) protein is Teichoic acid poly(glycerol phosphate) polymerase (tagF).